The chain runs to 491 residues: CTD small phosphatase-like protein 1 (491 aa).

Disordered stretches follow at residues 1 to 53 (MTYA…SLDY), 140 to 198 (KLTK…TARR), 221 to 249 (KIQS…TGPP), and 261 to 282 (TVTG…DGVT). A compositionally biased stretch (pro residues) spans 17–26 (VPPPRTPVGP). Residues 37-49 (SASQPLQPKNGAN) are compositionally biased toward polar residues. The segment covering 141–156 (LTKDEKNGGKMNRDGG) has biased composition (basic and acidic residues). Positions 176–187 (ASTPLNSFSANA) are enriched in polar residues. Low complexity predominate over residues 223 to 237 (QSSQRTNSTNNNHQN). Composition is skewed to polar residues over residues 238 to 249 (GRPSTPTNTGPP) and 264 to 276 (GLPT…QQNG). Residues 307 to 465 (QDSNKKCLVI…LDILPSLEHL (159 aa)) enclose the FCP1 homology domain. D317 functions as the 4-aspartylphosphate intermediate in the catalytic mechanism. Residues D317, D319, and N428 each contribute to the Mg(2+) site. The active-site Proton donor is D319.

May interact (via phosphatase domain) with cpna-1. Isoform a and isoform b may interact with lim-9 (via LIM zinc-binding domain). Isoform a and isoform b may interact (via FCP1 homology domain) with unc-89 (via fibronectin type-III domain 1, Ig-like C2-type domain 48/49 and protein kinase domain 1 or Ig-like C2-type domain 50, fibronectin type-III domain 2 and protein kinase domain 2); the interaction may act as a molecular bridge to bring two unc-89 molecules together or to stabilize a loop between the 2 protein kinase domains. Requires Mg(2+) as cofactor. As to expression, expressed in pharyngeal, vulval and body wall muscles.

It is found in the cytoplasm. It localises to the myofibril. The protein resides in the sarcomere. Its subcellular location is the m line. The catalysed reaction is O-phospho-L-seryl-[protein] + H2O = L-seryl-[protein] + phosphate. It catalyses the reaction O-phospho-L-threonyl-[protein] + H2O = L-threonyl-[protein] + phosphate. With respect to regulation, inhibited by beryllium trifluoride (BeF(3-)) and tetrafluoroaluminate (AlF(4-)) but not by sodium fluoride (NaF) or sodium orthovanadate (Na3VO4). Functionally, phosphatase which may play a role in the egg laying muscles. The chain is CTD small phosphatase-like protein 1 from Caenorhabditis elegans.